Consider the following 395-residue polypeptide: MAKHLFTSESVTEGHPDKVADQISDAILDSILSKDPLARVACETLVTTGLVLISGEITCKCYVDIPNIVRETVRDIGYTRAKYGFDCDTCAVLTSIDEQSPDIAMGVDEALEAREGLDDLFSRVGAGDQGIMVGYATDETPTLMPMPIYLAHRLARRLASVRKNGTLPYLRPDGKTQVTVQYDNGRPVKVDTVVISAQHHPAVDLGTIRADLIEKVVEPIIPVGLITNSTRYLINPTGRFVIGGPQADTGLTGRKIVVDTYGGMARHGGGAFSGKDPTKVDRSASYAARYVAKNIVAAGLASRCEVHVAYAIGVAKPVALRVDTFGTGLINEERLEKLVLEHFDLRPAAIIHHLDLRRPIYRQVAAYGHFGRGDLNLPWERIDKAEELRAAGTGG.

H15 contacts ATP. A Mg(2+)-binding site is contributed by D17. E43 provides a ligand contact to K(+). Residues E56 and Q99 each contribute to the L-methionine site. A flexible loop region spans residues 99–109 (QSPDIAMGVDE). Residues 173-175 (DGK), 239-240 (RF), D248, 254-255 (RK), A271, and K275 each bind ATP. Position 248 (D248) interacts with L-methionine. K279 is a binding site for L-methionine.

This sequence belongs to the AdoMet synthase family. Homotetramer; dimer of dimers. Mg(2+) serves as cofactor. Requires K(+) as cofactor.

The protein localises to the cytoplasm. It catalyses the reaction L-methionine + ATP + H2O = S-adenosyl-L-methionine + phosphate + diphosphate. It participates in amino-acid biosynthesis; S-adenosyl-L-methionine biosynthesis; S-adenosyl-L-methionine from L-methionine: step 1/1. Catalyzes the formation of S-adenosylmethionine (AdoMet) from methionine and ATP. The overall synthetic reaction is composed of two sequential steps, AdoMet formation and the subsequent tripolyphosphate hydrolysis which occurs prior to release of AdoMet from the enzyme. This Desulforudis audaxviator (strain MP104C) protein is S-adenosylmethionine synthase.